Consider the following 392-residue polypeptide: Formate-dependent phosphoribosylglycinamide formyltransferase (392 aa).

N(1)-(5-phospho-beta-D-ribosyl)glycinamide is bound by residues Glu22–Leu23 and Glu82. ATP is bound by residues Arg114, Lys155, Ser160–Gln165, Glu195–Val198, and Glu203. The region spanning Arg119–Leu308 is the ATP-grasp domain. Positions 267 and 279 each coordinate Mg(2+). N(1)-(5-phospho-beta-D-ribosyl)glycinamide contacts are provided by residues Asp286, Lys355, and Arg362–Arg363.

The protein belongs to the PurK/PurT family. Homodimer.

The catalysed reaction is N(1)-(5-phospho-beta-D-ribosyl)glycinamide + formate + ATP = N(2)-formyl-N(1)-(5-phospho-beta-D-ribosyl)glycinamide + ADP + phosphate + H(+). It participates in purine metabolism; IMP biosynthesis via de novo pathway; N(2)-formyl-N(1)-(5-phospho-D-ribosyl)glycinamide from N(1)-(5-phospho-D-ribosyl)glycinamide (formate route): step 1/1. Involved in the de novo purine biosynthesis. Catalyzes the transfer of formate to 5-phospho-ribosyl-glycinamide (GAR), producing 5-phospho-ribosyl-N-formylglycinamide (FGAR). Formate is provided by PurU via hydrolysis of 10-formyl-tetrahydrofolate. This is Formate-dependent phosphoribosylglycinamide formyltransferase from Cronobacter sakazakii (strain ATCC BAA-894) (Enterobacter sakazakii).